Here is a 328-residue protein sequence, read N- to C-terminus: Ribose-phosphate pyrophosphokinase (328 aa).

ATP contacts are provided by residues 39-41 and 98-99; these read DGE and RQ. Mg(2+) is bound by residues histidine 132 and aspartate 172. Residue lysine 195 is part of the active site. Residues arginine 197, aspartate 221, and 225–229 each bind D-ribose 5-phosphate; that span reads DTGGT.

It belongs to the ribose-phosphate pyrophosphokinase family. Class I subfamily. As to quaternary structure, homohexamer. Mg(2+) is required as a cofactor.

It localises to the cytoplasm. The enzyme catalyses D-ribose 5-phosphate + ATP = 5-phospho-alpha-D-ribose 1-diphosphate + AMP + H(+). It participates in metabolic intermediate biosynthesis; 5-phospho-alpha-D-ribose 1-diphosphate biosynthesis; 5-phospho-alpha-D-ribose 1-diphosphate from D-ribose 5-phosphate (route I): step 1/1. Involved in the biosynthesis of the central metabolite phospho-alpha-D-ribosyl-1-pyrophosphate (PRPP) via the transfer of pyrophosphoryl group from ATP to 1-hydroxyl of ribose-5-phosphate (Rib-5-P). The sequence is that of Ribose-phosphate pyrophosphokinase from Mycoplasma pneumoniae (strain ATCC 29342 / M129 / Subtype 1) (Mycoplasmoides pneumoniae).